Consider the following 257-residue polypeptide: Early E1A protein (257 aa).

Disordered regions lie at residues 26 to 46 (NATMGDDHPEPPTPFGTPSLH) and 75 to 103 (LAAEEASSPSSDSDSSLHTPRHDRGEKEI). Positions 43 to 51 (PSLHDLYDL) are interaction with RB1 in competition with E2F1. Residues 75–91 (LAAEEASSPSSDSDSSL) show a composition bias toward low complexity. Residues 79–144 (EASSPSSDSD…ASHGVQAVSE (66 aa)) form an interaction with UBE2I region. Over residues 94–103 (PRHDRGEKEI) the composition is skewed to basic and acidic residues. A PXLXP motif, interaction with host ZMYND11 motif is present at residues 104–108 (PGLKW). The LXCXE motif, interaction with host RB1 and TMEM173/STING signature appears at 113–117 (LRCYE). A zinc finger lies at 158-178 (CKSCEFHRINTGDKAVLCALC). The tract at residues 191 to 221 (VSDADDETPTTESTLSPPEIGTSPSDNIVRP) is disordered. Residues 200–209 (TTESTLSPPE) are compositionally biased toward low complexity. The PXDLS motif, CTBP-binding signature appears at 246–250 (PLDLC). Residues 252–257 (RKRPRH) carry the Nuclear localization signal motif.

The protein belongs to the adenoviridae E1A protein family. Interacts with host UBE2I; this interaction interferes with polySUMOylation. Interacts with host RB1; this interaction induces the aberrant dissociation of RB1-E2F1 complex thereby disrupting the activity of RB1 and activating E2F1-regulated genes. Interacts with host ATF7; the interaction enhances ATF7-mediated viral transactivation activity which requires the zinc binding domains of both proteins. Isoform early E1A 32 kDa protein and isoform early E1A 26 kDa protein interact (via N-terminus) with CUL1 and E3 ubiquitin ligase RBX1; these interactions inhibit RBX1-CUL1-dependent elongation reaction of ubiquitin chains and attenuate ubiquitination of SCF(FBXW7) target proteins. Interacts (via PXLXP motif) with host ZMYND11/BS69 (via MYND-type zinc finger); this interaction inhibits E1A mediated transactivation. Interacts with host EP300; this interaction stimulates the acetylation of RB1 by recruiting EP300 and RB1 into a multimeric-protein complex. Interacts with host CTBP1 and CTBP2; this interaction seems to potentiate viral replication. Interacts with host DCAF7. Interacts with host DYRK1A. Interacts with host KPNA4; this interaction allows E1A import into the host nucleus. Interacts with host EP400; this interaction stabilizes MYC. Interacts with host TBP protein; this interaction probably disrupts the TBP-TATA complex. Interacts (via LXCXE motif) with host TMEM173/STING; this interaction impairs the ability of TMEM173/STING to sense cytosolic DNA and promote the production of type I interferon (IFN-alpha and IFN-beta). Interacts (via C-terminus) with host ZBED1/hDREF (via C-terminus); the interaction is direct.

It localises to the host nucleus. Functionally, plays a role in viral genome replication by driving entry of quiescent cells into the cell cycle. Stimulation of progression from G1 to S phase allows the virus to efficiently use the cellular DNA replicating machinery to achieve viral genome replication. E1A protein has both transforming and trans-activating activities. Induces the disassembly of the E2F1 transcription factor from RB1 by direct competition for the same binding site on RB1, with subsequent transcriptional activation of E2F1-regulated S-phase genes and of the E2 region of the adenoviral genome. Release of E2F1 leads to the ARF-mediated inhibition of MDM2 and causes TP53/p53 to accumulate because it is not targeted for degradation by MDM2-mediated ubiquitination anymore. This increase in TP53, in turn, would arrest the cell proliferation and direct its death but this effect is counteracted by the viral protein E1B-55K. Inactivation of the ability of RB1 to arrest the cell cycle is critical for cellular transformation, uncontrolled cellular growth and proliferation induced by viral infection. Interaction with RBX1 and CUL1 inhibits ubiquitination of the proteins targeted by SCF(FBXW7) ubiquitin ligase complex, and may be linked to unregulated host cell proliferation. The tumorigenesis-restraining activity of E1A may be related to the disruption of the host CtBP-CtIP complex through the CtBP binding motif. Interaction with host TMEM173/STING impairs the ability of TMEM173/STING to sense cytosolic DNA and promote the production of type I interferon (IFN-alpha and IFN-beta). Promotes the sumoylation of host ZBED1/hDREF with SUMO1. The protein is Early E1A protein of Human adenovirus E serotype 4 (HAdV-4).